Here is a 292-residue protein sequence, read N- to C-terminus: Zinc finger protein OZF (292 aa).

10 consecutive C2H2-type zinc fingers follow at residues 16–38 (FACK…EHFH), 44–66 (FECN…QSTH), 72–94 (FECS…QKIH), 100–122 (FECK…QRTH), 128–150 (FICK…EKIH), 156–178 (FKCN…QNIH), 184–206 (YECN…VRIH), 212–234 (YECN…VRSH), 240–262 (YGCN…LRIH), and 268–290 (YQCS…QKIH). Glycyl lysine isopeptide (Lys-Gly) (interchain with G-Cter in SUMO2) cross-links involve residues K28, K51, and K56. Residues K157 and K169 each participate in a glycyl lysine isopeptide (Lys-Gly) (interchain with G-Cter in SUMO) cross-link. A Glycyl lysine isopeptide (Lys-Gly) (interchain with G-Cter in SUMO2) cross-link involves residue K173. The segment at 212-292 (YECNVCGKAF…HIRHQKIHTH (81 aa)) is interaction with TERF2IP.

Belongs to the krueppel C2H2-type zinc-finger protein family. In terms of assembly, binds DNA. Interacts with SUMO conjugating enzyme UBC9/UBE2I. Interacts with the telomeric protein TERF2IP. In terms of tissue distribution, expressed in heart, brain, liver, lung, skeletal muscle and kidney, and at much lower level in spleen and testicle. Expressed in lactating mammary gland.

The protein resides in the nucleus. The protein is Zinc finger protein OZF (Znf146) of Mus musculus (Mouse).